The chain runs to 71 residues: U-scoloptoxin(21)-Sm1a (71 aa).

The first 21 residues, 1 to 21 (MKSVIFALFLVYLLIVRAAEA), serve as a signal peptide directing secretion. The segment at 45-71 (IELANDPNGPGRRRRAPAENEDFLKHS) is disordered. Basic and acidic residues predominate over residues 60–71 (APAENEDFLKHS).

Belongs to the scoloptoxin-21 family. In terms of tissue distribution, expressed by the venom gland.

It is found in the secreted. The chain is U-scoloptoxin(21)-Sm1a from Scolopendra morsitans (Tanzanian blue ringleg centipede).